Here is an 833-residue protein sequence, read N- to C-terminus: DNA gyrase subunit A (833 aa).

One can recognise a Topo IIA-type catalytic domain in the interval 34-500 (LPDVRDGLKP…AGDVRDIEDI (467 aa)). Catalysis depends on Tyr122, which acts as the O-(5'-phospho-DNA)-tyrosine intermediate. The GyrA-box signature appears at 527-533 (QKRGGQG).

Belongs to the type II topoisomerase GyrA/ParC subunit family. In terms of assembly, heterotetramer, composed of two GyrA and two GyrB chains. In the heterotetramer, GyrA contains the active site tyrosine that forms a transient covalent intermediate with DNA, while GyrB binds cofactors and catalyzes ATP hydrolysis.

The protein localises to the cytoplasm. It carries out the reaction ATP-dependent breakage, passage and rejoining of double-stranded DNA.. In terms of biological role, a type II topoisomerase that negatively supercoils closed circular double-stranded (ds) DNA in an ATP-dependent manner to modulate DNA topology and maintain chromosomes in an underwound state. Negative supercoiling favors strand separation, and DNA replication, transcription, recombination and repair, all of which involve strand separation. Also able to catalyze the interconversion of other topological isomers of dsDNA rings, including catenanes and knotted rings. Type II topoisomerases break and join 2 DNA strands simultaneously in an ATP-dependent manner. This is DNA gyrase subunit A from Chlamydia muridarum (strain MoPn / Nigg).